The following is a 340-amino-acid chain: Photosystem II protein D1 (340 aa).

3 helical membrane-spanning segments follow: residues 25-42 (YIGW…LATV), 114-129 (HFFL…EWEF), and 138-152 (WIFV…AAAA). Histidine 114 contributes to the chlorophyll a binding site. A pheophytin a-binding site is contributed by tryptophan 122. Residues aspartate 166 and glutamate 185 each coordinate [CaMn4O5] cluster. A helical transmembrane segment spans residues 193 to 214 (FHILGVAGVFGGSLFSAMHGSL). Histidine 194 lines the chlorophyll a pocket. Residues histidine 211 and 260 to 261 (SF) each bind a quinone. Residue histidine 211 participates in Fe cation binding. Histidine 268 is a binding site for Fe cation. The chain crosses the membrane as a helical span at residues 270–284 (FLAAWPVIGIWFTSL). [CaMn4O5] cluster is bound by residues histidine 328, glutamate 329, aspartate 338, and alanine 340.

Belongs to the reaction center PufL/M/PsbA/D family. PSII is composed of 1 copy each of membrane proteins PsbA, PsbB, PsbC, PsbD, PsbE, PsbF, PsbH, PsbI, PsbJ, PsbK, PsbL, PsbM, PsbT, PsbX, PsbY, PsbZ, Psb30/Ycf12, at least 3 peripheral proteins of the oxygen-evolving complex and a large number of cofactors. It forms dimeric complexes. The D1/D2 heterodimer binds P680, chlorophylls that are the primary electron donor of PSII, and subsequent electron acceptors. It shares a non-heme iron and each subunit binds pheophytin, quinone, additional chlorophylls, carotenoids and lipids. D1 provides most of the ligands for the Mn4-Ca-O5 cluster of the oxygen-evolving complex (OEC). There is also a Cl(-1) ion associated with D1 and D2, which is required for oxygen evolution. The PSII complex binds additional chlorophylls, carotenoids and specific lipids. serves as cofactor. In terms of processing, tyr-157 forms a radical intermediate that is referred to as redox-active TyrZ, YZ or Y-Z.

It localises to the plastid. It is found in the chloroplast thylakoid membrane. The enzyme catalyses 2 a plastoquinone + 4 hnu + 2 H2O = 2 a plastoquinol + O2. Its function is as follows. Photosystem II (PSII) is a light-driven water:plastoquinone oxidoreductase that uses light energy to abstract electrons from H(2)O, generating O(2) and a proton gradient subsequently used for ATP formation. It consists of a core antenna complex that captures photons, and an electron transfer chain that converts photonic excitation into a charge separation. The D1/D2 (PsbA/PsbD) reaction center heterodimer binds P680, the primary electron donor of PSII as well as several subsequent electron acceptors. In Amphidinium operculatum (Dinoflagellate), this protein is Photosystem II protein D1.